A 151-amino-acid polypeptide reads, in one-letter code: Hemoglobin-2 (151 aa).

T2 bears the N-acetylthreonine mark. Residues 3 to 148 form the Globin domain; that stretch reads TLTNPQKAAI…ICKTLGDYMK (146 aa). A heme b-binding site is contributed by H97.

Belongs to the globin family. In terms of assembly, homotetramer.

It is found in the cytoplasm. This chain is Hemoglobin-2, found in Phacoides pectinatus (Thick lucine).